The following is a 1173-amino-acid chain: Rac guanine nucleotide exchange factor JJ (1173 aa).

Disordered stretches follow at residues 1–380, 458–479, and 712–765; these read MSYE…NQTQ, KDQL…LKQM, and DDQN…QQQQ. Composition is skewed to low complexity over residues 8–23 and 35–45; these read QQQQ…QQQQ and QQQQHPQPQYP. Over residues 50–62 the composition is skewed to polar residues; that stretch reads TAQSNDSQQQHYG. Low complexity-rich tracts occupy residues 72–82 and 98–118; these read TTSTTQQQQQQ and QYDQ…NYDY. Residues 119–133 show a composition bias toward polar residues; that stretch reads SNTSGNRNSGQYDQY. 3 stretches are compositionally biased toward low complexity: residues 134-143, 153-191, and 208-219; these read TTTNTTSANT, SPTP…TSTN, and SQTQQQHSPTSS. A compositionally biased stretch (polar residues) spans 220 to 239; that stretch reads YDYSQVTNNTATNYDSYYQQ. A compositionally biased stretch (low complexity) spans 240-258; sequence PTTPTSTSSSSSTTTTTTT. The span at 262-277 shows a compositional bias: basic and acidic residues; it reads SKFEKSQSLKNMDHFI. The span at 280–295 shows a compositional bias: polar residues; it reads TPSNTPSATINSWDYN. The segment covering 296-380 has biased composition (low complexity); sequence QQQPQPQQPQ…NTDTYSNQTQ (85 aa). Over residues 470–479 the composition is skewed to basic and acidic residues; the sequence is KKGEEDLKQM. The segment covering 743 to 765 has biased composition (low complexity); sequence QQPQPQQEQPPQQQQQQQQQQQQ. One can recognise an IQ domain in the interval 793-822; it reads RFGDIIRVQRVSRKWLARKKFKDLVKMKLL. The DH domain occupies 833–1016; it reads NRFKSVNELY…KDINKYINDR (184 aa). Residues 1044–1146 enclose the PH domain; sequence RYFVRESQCN…WLQDLSVELK (103 aa).

GTPase-activating protein. The sequence is that of Rac guanine nucleotide exchange factor JJ (gxcJJ) from Dictyostelium discoideum (Social amoeba).